Here is a 624-residue protein sequence, read N- to C-terminus: Pentatricopeptide repeat-containing protein At2g32630 (624 aa).

13 PPR repeats span residues F153–I187, D188–I222, T223–P257, E258–Y292, N293–S327, D328–P362, S363–I397, T398–A432, D433–L467, S468–P502, N503–P537, D538–Q572, and N573–I607.

Belongs to the PPR family. P subfamily.

The protein is Pentatricopeptide repeat-containing protein At2g32630 of Arabidopsis thaliana (Mouse-ear cress).